A 449-amino-acid polypeptide reads, in one-letter code: Chromosomal replication initiator protein DnaA (449 aa).

The interval 1–72 (MENIHDLWER…SETIDDLTGV (72 aa)) is domain I, interacts with DnaA modulators. Residues 72 to 111 (VRLYPKFVIPTSQLDEPFVEQELKKPMKQPPAQNGEMPNN) are domain II. Residues 112–328 (MLNDKYTFDT…GALIRVVAYS (217 aa)) are domain III, AAA+ region. Gly-156, Gly-158, Lys-159, and Thr-160 together coordinate ATP. The interval 329–449 (SLINQDMNAD…IQDISDKLRS (121 aa)) is domain IV, binds dsDNA.

It belongs to the DnaA family. As to quaternary structure, oligomerizes as a right-handed, spiral filament on DNA at oriC.

The protein resides in the cytoplasm. In terms of biological role, plays an essential role in the initiation and regulation of chromosomal replication. ATP-DnaA binds to the origin of replication (oriC) to initiate formation of the DNA replication initiation complex once per cell cycle. Binds the DnaA box (a 9 base pair repeat at the origin) and separates the double-stranded (ds)DNA. Forms a right-handed helical filament on oriC DNA; dsDNA binds to the exterior of the filament while single-stranded (ss)DNA is stabiized in the filament's interior. The ATP-DnaA-oriC complex binds and stabilizes one strand of the AT-rich DNA unwinding element (DUE), permitting loading of DNA polymerase. After initiation quickly degrades to an ADP-DnaA complex that is not apt for DNA replication. Binds acidic phospholipids. In Halalkalibacterium halodurans (strain ATCC BAA-125 / DSM 18197 / FERM 7344 / JCM 9153 / C-125) (Bacillus halodurans), this protein is Chromosomal replication initiator protein DnaA.